The primary structure comprises 95 residues: MKLIDVVKMGEALSNPIRVKILYILNKQPKNIYELAKELELSRPVVYAHLRKLEDADLVESDLVLEGSRAKRIYKAKEFKFYIDNEIIKKLFENE.

This is an uncharacterized protein from Methanocaldococcus jannaschii (strain ATCC 43067 / DSM 2661 / JAL-1 / JCM 10045 / NBRC 100440) (Methanococcus jannaschii).